A 141-amino-acid polypeptide reads, in one-letter code: Lutropin subunit beta (141 aa).

An N-terminal signal peptide occupies residues 1–20 (MEMLQGLLLWLLLSVAGVWA). Ser21 is subject to Blocked amino end (Ser). 6 cysteine pairs are disulfide-bonded: Cys29–Cys77, Cys43–Cys92, Cys46–Cys130, Cys54–Cys108, Cys58–Cys110, and Cys113–Cys120. A glycan (N-linked (GlcNAc...) asparagine) is linked at Asn33.

It belongs to the glycoprotein hormones subunit beta family. In terms of assembly, heterodimer of a common alpha chain and a unique beta chain which confers biological specificity to thyrotropin, lutropin, follitropin and gonadotropin.

The protein localises to the secreted. Promotes spermatogenesis and ovulation by stimulating the testes and ovaries to synthesize steroids. This chain is Lutropin subunit beta (LHB), found in Sus scrofa (Pig).